A 430-amino-acid chain; its full sequence is Elongation factor 1-alpha (430 aa).

In terms of domain architecture, tr-type G spans 7 to 219 (KPHVNIVFIG…DQIPEPEKPV (213 aa)). The interval 16–23 (GHVDHGKS) is G1. Position 16–23 (16–23 (GHVDHGKS)) interacts with GTP. S23 contacts Mg(2+). Residues 70–74 (GITID) form a G2 region. Residues 91-94 (DAPG) form a G3 region. Residues 91–95 (DAPGH) and 146–149 (NKMD) each bind GTP. The tract at residues 146-149 (NKMD) is G4. The segment at 183-185 (SAW) is G5.

Belongs to the TRAFAC class translation factor GTPase superfamily. Classic translation factor GTPase family. EF-Tu/EF-1A subfamily.

The protein localises to the cytoplasm. The catalysed reaction is GTP + H2O = GDP + phosphate + H(+). Its function is as follows. GTP hydrolase that promotes the GTP-dependent binding of aminoacyl-tRNA to the A-site of ribosomes during protein biosynthesis. In Pyrococcus woesei, this protein is Elongation factor 1-alpha.